We begin with the raw amino-acid sequence, 930 residues long: Translation initiation factor IF-2 (930 aa).

The segment at 29–316 (GEFVKSASST…GRKSKRAKRA (288 aa)) is disordered. Residues 81–120 (RPGPKPGPPVAQQPAAPAAPPAAPPAPPTPAAAPPSPAPA) are compositionally biased toward pro residues. Low complexity predominate over residues 121–135 (APAAATPAEPAAPSA). Pro residues-rich tracts occupy residues 136-155 (RPGPTPGPRPGPSAPKPGAP) and 180-191 (PRPQGPGGPRPG). The span at 192 to 204 (PGAGGPRPGGGPR) shows a compositional bias: gly residues. Positions 228 to 240 (GGGPRPGGGPRPT) are enriched in pro residues. Positions 241-301 (PGGAGRPGGG…GAAGAFGRPG (61 aa)) are enriched in gly residues. Basic residues predominate over residues 305 to 314 (KRGRKSKRAK). The 173-residue stretch at 426–598 (IRPPVVTVMG…VILTADASLD (173 aa)) folds into the tr-type G domain. A G1 region spans residues 435 to 442 (GHVDHGKT). Residue 435-442 (GHVDHGKT) coordinates GTP. Residues 460–464 (GITQH) form a G2 region. Residues 485–488 (DTPG) form a G3 region. GTP contacts are provided by residues 485–489 (DTPGH) and 539–542 (NKID). Positions 539–542 (NKID) are G4. The segment at 575-577 (SAK) is G5.

The protein belongs to the TRAFAC class translation factor GTPase superfamily. Classic translation factor GTPase family. IF-2 subfamily.

It is found in the cytoplasm. Its function is as follows. One of the essential components for the initiation of protein synthesis. Protects formylmethionyl-tRNA from spontaneous hydrolysis and promotes its binding to the 30S ribosomal subunits. Also involved in the hydrolysis of GTP during the formation of the 70S ribosomal complex. The protein is Translation initiation factor IF-2 of Mycolicibacterium vanbaalenii (strain DSM 7251 / JCM 13017 / BCRC 16820 / KCTC 9966 / NRRL B-24157 / PYR-1) (Mycobacterium vanbaalenii).